Consider the following 151-residue polypeptide: Large ribosomal subunit protein bL9 (151 aa).

It belongs to the bacterial ribosomal protein bL9 family.

In terms of biological role, binds to the 23S rRNA. This chain is Large ribosomal subunit protein bL9, found in Lactobacillus delbrueckii subsp. bulgaricus (strain ATCC BAA-365 / Lb-18).